The following is a 496-amino-acid chain: UDP-glycosyltransferase 73C3 (496 aa).

Residues Ser-297, 357 to 359, 374 to 382, and 396 to 399 contribute to the UDP-alpha-D-glucose site; these read APQ, HCGWNSTLE, and FGDQ.

This sequence belongs to the UDP-glycosyltransferase family.

The chain is UDP-glycosyltransferase 73C3 (UGT73C3) from Arabidopsis thaliana (Mouse-ear cress).